A 298-amino-acid polypeptide reads, in one-letter code: Putative GATA zinc finger domain-containing protein 25 (298 aa).

The stretch at Asp-4–Gln-37 forms a coiled coil. The interval Gln-148 to Glu-227 is disordered. Residues Glu-183–Glu-202 are compositionally biased toward acidic residues. The span at Asn-203–Lys-212 shows a compositional bias: basic and acidic residues. The segment covering Asn-214 to Lys-223 has biased composition (basic residues). A GATA-type; degenerate zinc finger spans residues Cys-229–Cys-256.

The protein is Putative GATA zinc finger domain-containing protein 25 (gtaY) of Dictyostelium discoideum (Social amoeba).